Consider the following 506-residue polypeptide: Maturase K (506 aa).

It belongs to the intron maturase 2 family. MatK subfamily.

The protein resides in the plastid. It is found in the chloroplast. Usually encoded in the trnK tRNA gene intron. Probably assists in splicing its own and other chloroplast group II introns. The protein is Maturase K of Gaultheria procumbens (Wintergreen).